Reading from the N-terminus, the 138-residue chain is Large ribosomal subunit protein uL16 (138 aa).

Residues 1–13 show a composition bias toward basic residues; it reads MLQPSRRKYRKEQ. A disordered region spans residues 1–24; that stretch reads MLQPSRRKYRKEQKGRNTGLASRG.

This sequence belongs to the universal ribosomal protein uL16 family. In terms of assembly, part of the 50S ribosomal subunit.

Binds 23S rRNA and is also seen to make contacts with the A and possibly P site tRNAs. The sequence is that of Large ribosomal subunit protein uL16 from Bordetella bronchiseptica (strain ATCC BAA-588 / NCTC 13252 / RB50) (Alcaligenes bronchisepticus).